The following is a 343-amino-acid chain: Large ribosomal subunit protein uL3 (343 aa).

Disordered stretches follow at residues 1 to 31 and 238 to 262; these read MGHR…TPRS and KGSR…PGQM.

It belongs to the universal ribosomal protein uL3 family. In terms of assembly, part of the 50S ribosomal subunit. Forms a cluster with proteins L14 and L24e.

One of the primary rRNA binding proteins, it binds directly near the 3'-end of the 23S rRNA, where it nucleates assembly of the 50S subunit. The chain is Large ribosomal subunit protein uL3 from Sulfurisphaera tokodaii (strain DSM 16993 / JCM 10545 / NBRC 100140 / 7) (Sulfolobus tokodaii).